The chain runs to 211 residues: Mitotic spindle assembly checkpoint protein MAD2B (211 aa).

Residues 13–203 enclose the HORMA domain; sequence QVVADVLCEF…SDILKMQLYV (191 aa). Residues 21–155 form a mediates interaction with REV1 and REV3L and homodimerization region; that stretch reads EFLEVAVHLI…FTVLVHTREA (135 aa).

As to quaternary structure, homooligomer. Heterodimer with REV3L. This dimer forms the minimal DNA polymerase zeta complex (Pol-zeta2), with REV3L bearing DNA polymerase catalytic activity, although its activity is very low in this context. Component of the tetrameric Pol-zeta complex (Pol-zeta4), which consists of REV3L, MAD2L2, POLD2 and POLD3; Pol-zeta4 is the fully active form of DNA polymerase zeta. Component of the shieldin complex, consisting of SHLD1, SHLD2, SHLD3 and MAD2L2/REV7. Within the complex, SHLD2 forms a scaffold which interacts with a SHLD3-MAD2L2 subcomplex via its N-terminus, and with SHLD1 via its C-terminus. Interacts with REV1. Interacts with ADAM9. Interacts with CHAMP1. Interacts with FZR1 (in complex with the anaphase promoting complex APC). May interact with CDC20. Interacts with RAN. Interacts with ELK1; the interaction is direct and recruits MAD2L2 to ELK1-specific promoters. May interact with the JNK kinases MAPK8 and/or MAPK9 to stimulate ELK1 phosphorylation and transcriptional activity upon DNA damage. Interacts with TCF7L2; prevents its binding to promoters and negatively modulates its transcriptional activity. Interacts with YY1AP1. Interacts with PRCC; the interaction is direct. Interacts with POGZ. Interacts with ASTE1.

It localises to the nucleus. It is found in the cytoplasm. Its subcellular location is the cytoskeleton. The protein localises to the spindle. Its function is as follows. Adapter protein able to interact with different proteins and involved in different biological processes. Mediates the interaction between the error-prone DNA polymerase zeta catalytic subunit REV3L and the inserter polymerase REV1, thereby mediating the second polymerase switching in translesion DNA synthesis. Translesion DNA synthesis releases the replication blockade of replicative polymerases, stalled in presence of DNA lesions. Component of the shieldin complex, which plays an important role in repair of DNA double-stranded breaks (DSBs). During G1 and S phase of the cell cycle, the complex functions downstream of TP53BP1 to promote non-homologous end joining (NHEJ) and suppress DNA end resection. Mediates various NHEJ-dependent processes including immunoglobulin class-switch recombination, and fusion of unprotected telomeres. May also regulate another aspect of cellular response to DNA damage through regulation of the JNK-mediated phosphorylation and activation of the transcriptional activator ELK1. Inhibits the FZR1- and probably CDC20-mediated activation of the anaphase promoting complex APC thereby regulating progression through the cell cycle. Regulates TCF7L2-mediated gene transcription and may play a role in epithelial-mesenchymal transdifferentiation. The sequence is that of Mitotic spindle assembly checkpoint protein MAD2B (MAD2L2) from Bos taurus (Bovine).